We begin with the raw amino-acid sequence, 115 residues long: Protein Diedel (115 aa).

Positions 1–24 (MASPVVSLLLVGICALAFVHVARS) are cleaved as a signal peptide. 5 cysteine pairs are disulfide-bonded: cysteine 26–cysteine 81, cysteine 27–cysteine 87, cysteine 42–cysteine 55, cysteine 60–cysteine 71, and cysteine 76–cysteine 83.

This sequence belongs to the Diedel family. In terms of tissue distribution, detected in hemolymph (at protein level). Also expressed in the fat body and is probably synthesized in the fat body and secreted into the hemolymph.

The protein localises to the secreted. Functionally, cytokine which promotes survival following infection by Sindbis virus by suppressing the immune deficiency pathway. Following infection by the enteropathogenic bacteria E.carotovora limits intestinal stem cells proliferation. When secreted from muscle or adipose tissue, can attenuate age-related intestinal tissue degeneration by inhibiting apoptosis. In Drosophila melanogaster (Fruit fly), this protein is Protein Diedel.